Here is a 487-residue protein sequence, read N- to C-terminus: GTPase Der (487 aa).

2 consecutive EngA-type G domains span residues 2-164 and 203-374; these read KTIA…SLAK and IAVG…QRFA. GTP-binding positions include 8-15, 55-59, 116-119, 209-216, 256-260, and 320-323; these read GKPNVGKS, DTGGI, NKVD, GRVNVGKS, DTAGI, and NKWD. The region spanning 375-459 is the KH-like domain; the sequence is YRIPTSALND…PILLSVKGKN (85 aa). Residues 459 to 480 are compositionally biased toward basic and acidic residues; that stretch reads NAKDEENTSAKKESPSKVSHRE. A disordered region spans residues 459–487; it reads NAKDEENTSAKKESPSKVSHRESKNRRFV.

The protein belongs to the TRAFAC class TrmE-Era-EngA-EngB-Septin-like GTPase superfamily. EngA (Der) GTPase family. Associates with the 50S ribosomal subunit.

Functionally, GTPase that plays an essential role in the late steps of ribosome biogenesis. In Helicobacter hepaticus (strain ATCC 51449 / 3B1), this protein is GTPase Der.